A 274-amino-acid chain; its full sequence is MSQIKPSRLSSSAEIRGARQLDVLQRHKLAEPQQDWLAEEVPVALVYNGISHVVMMATPKDLAAFALGFSLSEGIISSPQDIYAIEMTPGCNGIEVNIELSSRRFAGLKERRRAMAGRTGCGVCGIEQLDDIFRPITPLPFTQAFNLEHLDTALAQLKQVQPVGQLTGCTHAAAWINPEGELLGGCEDVGRHVALDKLLGIRAKQPWQQGAVLVSSRASYEMVQKTAMCGAEILFAVSAATTLAVEVAERCNLTLVGFSKPGRATVYTHPQRIK.

Catalysis depends on C121, which acts as the Cysteine persulfide intermediate. A Mo-bis(molybdopterin guanine dinucleotide)-binding site is contributed by F258–R263.

It belongs to the FdhD family.

Its subcellular location is the cytoplasm. Required for formate dehydrogenase (FDH) activity. Acts as a sulfur carrier protein that transfers sulfur from IscS to the molybdenum cofactor prior to its insertion into FDH. The sequence is that of Sulfur carrier protein FdhD from Yersinia pseudotuberculosis serotype IB (strain PB1/+).